A 133-amino-acid polypeptide reads, in one-letter code: Antifungal protein ginkbilobin-like protein 2 (133 aa).

The first 24 residues, 1-24 (MSMGSFGFALAVMVLAVLVASAAG), serve as a signal peptide directing secretion. A Gnk2-homologous domain is found at 28–133 (TNLVSSACNG…CFIRYEQYSI (106 aa)). An alpha-D-mannopyranose-binding site is contributed by N36. 2 disulfides stabilise this stretch: C87–C96 and C99–C124. Alpha-D-mannopyranose is bound by residues R118 and E129.

Functionally, exerts antifungal activity through its carbohydrate-binding specificity. This is Antifungal protein ginkbilobin-like protein 2 from Picea glauca (White spruce).